We begin with the raw amino-acid sequence, 250 residues long: Tripartite motif-containing protein 74 (250 aa).

The RING-type zinc finger occupies 16-57; the sequence is CPICLEVFKESLMLQCGHSYCKGCLVSLSYHLDTKVRCPMCW. The B box-type zinc-finger motif lies at 84–125; it reads PEPKVCVHHRNPLSLFCEKDQELICGLCGLLGSHQHHPVTPV. Zn(2+) contacts are provided by Cys89, His92, Cys111, and His117. Coiled coils occupy residues 125–169 and 204–235; these read VSTV…NESD and LVAS…FGNE.

Belongs to the TRIM/RBCC family.

In Homo sapiens (Human), this protein is Tripartite motif-containing protein 74 (TRIM74).